The chain runs to 194 residues: Holliday junction branch migration complex subunit RuvA (194 aa).

A domain I region spans residues 1 to 64 (MIGRLRGVLT…DDSAALYGFL (64 aa)). The segment at 65–140 (SESERRLFRH…RAADFNNGIS (76 aa)) is domain II. The flexible linker stretch occupies residues 140 to 144 (STSGK). The interval 145 to 194 (LNLDTVSEAALALQQLGYKPAEAARMARDAGTESDDVAIVIKKALQTVLR) is domain III.

It belongs to the RuvA family. In terms of assembly, homotetramer. Forms an RuvA(8)-RuvB(12)-Holliday junction (HJ) complex. HJ DNA is sandwiched between 2 RuvA tetramers; dsDNA enters through RuvA and exits via RuvB. An RuvB hexamer assembles on each DNA strand where it exits the tetramer. Each RuvB hexamer is contacted by two RuvA subunits (via domain III) on 2 adjacent RuvB subunits; this complex drives branch migration. In the full resolvosome a probable DNA-RuvA(4)-RuvB(12)-RuvC(2) complex forms which resolves the HJ.

It is found in the cytoplasm. The RuvA-RuvB-RuvC complex processes Holliday junction (HJ) DNA during genetic recombination and DNA repair, while the RuvA-RuvB complex plays an important role in the rescue of blocked DNA replication forks via replication fork reversal (RFR). RuvA specifically binds to HJ cruciform DNA, conferring on it an open structure. The RuvB hexamer acts as an ATP-dependent pump, pulling dsDNA into and through the RuvAB complex. HJ branch migration allows RuvC to scan DNA until it finds its consensus sequence, where it cleaves and resolves the cruciform DNA. This Xylella fastidiosa (strain M23) protein is Holliday junction branch migration complex subunit RuvA.